The primary structure comprises 220 residues: uncharacterized protein (220 aa).

A helical transmembrane segment spans residues 10 to 30 (FFIIGGVILSIGLILFFLLGF).

The protein resides in the membrane. This is an uncharacterized protein from Methanocaldococcus jannaschii (strain ATCC 43067 / DSM 2661 / JAL-1 / JCM 10045 / NBRC 100440) (Methanococcus jannaschii).